Consider the following 483-residue polypeptide: MAHRILRDHEADGWERSDFPIICESCLGDNPYVRMTKANYDKECKICTRPFTVFRWRPGRDARYKKTEVCQTCCKLKNVCQVCLLDLEYGLPVQVRDTALNISTHDSIPKSDVNREFFAEEHDRKTRAGLDYESSFGKIRPNDTIRMLQRTTPYYKRNRAHICSFFIRGECTRGDECPYRHEMPETGELSQQNIKDRYYGVNDPVALKLLGKAGEMGTLESPEDQSIRTLYVGGLNSRVLEQDIRDQFYAHGEIESIRILAEKACAFVTYTTREGAEKAAEELSNRLVVNGQRLKLTWGRPQVPKPDQDGSNQQGSVAHSGLLPRAVISQQQNQPPPMLQYYMHPPPPQPPHQDRPFYPSMDPQRMGAVSSSKESGSSTSDNRGASSSSYTMPPHGHYPQHQPYPPPSYGGYMQPPYQQYPPYHHGHSQQADHDYPQQPGPGSRPNPPHPSSVSAPPPDSVSAAPSGSSQQSADAAVTTGSSQ.

A C3H1-type zinc finger spans residues 157 to 184; that stretch reads RNRAHICSFFIRGECTRGDECPYRHEMP. The 74-residue stretch at 228 to 301 folds into the RRM domain; that stretch reads RTLYVGGLNS…QRLKLTWGRP (74 aa). Disordered stretches follow at residues 298 to 317 and 336 to 483; these read WGRP…QGSV and PPML…GSSQ. Positions 336 to 351 are enriched in pro residues; sequence PPMLQYYMHPPPPQPP. Residues 370–380 are compositionally biased toward low complexity; that stretch reads SSSKESGSSTS. Polar residues predominate over residues 381–391; sequence DNRGASSSSYT. Low complexity-rich tracts occupy residues 392-401 and 409-423; these read MPPHGHYPQH and YGGY…YPPY. Pro residues predominate over residues 438–459; that stretch reads QPGPGSRPNPPHPSSVSAPPPD. The segment covering 460–476 has biased composition (low complexity); that stretch reads SVSAAPSGSSQQSADAA.

This Arabidopsis thaliana (Mouse-ear cress) protein is Zinc finger CCCH domain-containing protein 25.